The chain runs to 468 residues: 3-isopropylmalate dehydratase large subunit (468 aa).

C347, C407, and C410 together coordinate [4Fe-4S] cluster.

Belongs to the aconitase/IPM isomerase family. LeuC type 1 subfamily. As to quaternary structure, heterodimer of LeuC and LeuD. [4Fe-4S] cluster serves as cofactor.

It catalyses the reaction (2R,3S)-3-isopropylmalate = (2S)-2-isopropylmalate. It participates in amino-acid biosynthesis; L-leucine biosynthesis; L-leucine from 3-methyl-2-oxobutanoate: step 2/4. In terms of biological role, catalyzes the isomerization between 2-isopropylmalate and 3-isopropylmalate, via the formation of 2-isopropylmaleate. The sequence is that of 3-isopropylmalate dehydratase large subunit from Synechocystis sp. (strain ATCC 27184 / PCC 6803 / Kazusa).